The following is a 170-amino-acid chain: Large ribosomal subunit protein bL17 (170 aa).

Low complexity predominate over residues 124–134 (AAEAPKAAKAA). The tract at residues 124 to 170 (AAEAPKAAKAAPVKEAKPAAEEAPAKPKRTRKPKADEADAEAAKEEN) is disordered. Basic and acidic residues-rich tracts occupy residues 135–148 (PVKEAKPAAEEAPA) and 156–170 (PKADEADAEAAKEEN).

This sequence belongs to the bacterial ribosomal protein bL17 family. In terms of assembly, part of the 50S ribosomal subunit. Contacts protein L32.

The protein is Large ribosomal subunit protein bL17 of Desulfovibrio desulfuricans (strain ATCC 27774 / DSM 6949 / MB).